We begin with the raw amino-acid sequence, 326 residues long: tRNA-modifying protein YgfZ (326 aa).

Folate is bound by residues Trp27 and Trp189.

This sequence belongs to the tRNA-modifying YgfZ family.

Its subcellular location is the cytoplasm. Its function is as follows. Folate-binding protein involved in regulating the level of ATP-DnaA and in the modification of some tRNAs. It is probably a key factor in regulatory networks that act via tRNA modification, such as initiation of chromosomal replication. This chain is tRNA-modifying protein YgfZ, found in Shigella dysenteriae serotype 1 (strain Sd197).